The sequence spans 65 residues: Venom protein Vn4.6 (65 aa).

The N-terminal stretch at 1 to 23 is a signal peptide; sequence MSKIILAIFLIVLCGLIFVTVDA.

In terms of processing, contains 2 disulfide bonds. As to expression, expressed by the venom gland.

The protein resides in the secreted. Endoparasitoid venom protein that interferes with the activation of host hemolymph prophenoloxidase. May act in conjunction with other venom proteins (such as Vn50), by competitive binding to the zymogen and thereby interrupting the enzyme. The sequence is that of Venom protein Vn4.6 from Cotesia rubecula (Cabbage white butterfly parasite).